The primary structure comprises 251 residues: Ribosome maturation factor RimP (251 aa).

The tract at residues 176 to 251 is disordered; the sequence is SLRRGSAPPQ…ARLKNRDTLH (76 aa). A compositionally biased stretch (acidic residues) spans 186-196; it reads DGEEGDEEEGA. A compositionally biased stretch (basic and acidic residues) spans 216–226; it reads PKLDKKSDKPV.

It belongs to the RimP family.

It localises to the cytoplasm. Functionally, required for maturation of 30S ribosomal subunits. The polypeptide is Ribosome maturation factor RimP (Methylorubrum extorquens (strain PA1) (Methylobacterium extorquens)).